Consider the following 841-residue polypeptide: Rhomboid-like protease 5 (841 aa).

The segment covering 1–10 has biased composition (low complexity); it reads MSSKGGSSRL. The segment at 1-289 is disordered; that stretch reads MSSKGGSSRL…GGDGGPRRHS (289 aa). Residues 11–51 show a composition bias toward basic and acidic residues; sequence GSKDLKKMTSRTERELRDSGRVRGEVERVEKRLRATAKVKE. The span at 95 to 132 shows a compositional bias: low complexity; it reads LRPASSSPRLASSSRPTESTLPSSSSRALQGASSSSSS. Basic and acidic residues-rich tracts occupy residues 154-163, 209-230, and 243-275; these read LRQEKKRLPE, RTAE…RGSV, and SSHE…RSGD. 6 helical membrane passes run 323–343, 464–484, 492–512, 526–546, 571–590, and 673–693; these read FLMI…ELVL, MFRV…LLNV, WILE…VGGV, VTVG…PFSI, FGNM…GGLI, and FAAA…LLVP. The active-site Nucleophile is the S531. H585 is a catalytic residue.

The protein belongs to the peptidase S54 family.

The protein resides in the membrane. It carries out the reaction Cleaves type-1 transmembrane domains using a catalytic dyad composed of serine and histidine that are contributed by different transmembrane domains.. Serine protease involved in intramembrane proteolysis. Cleaves microneme adhesins, such as MIC2. This step is essential for efficient invasion of host cells. Catalyzes intramembrane proteolysis of AMA1. This Toxoplasma gondii protein is Rhomboid-like protease 5 (ROM5).